The primary structure comprises 397 residues: Decapping and exoribonuclease protein (397 aa).

A compositionally biased stretch (basic residues) spans 1–10; that stretch reads MEPRGTKRKA. A disordered region spans residues 1 to 30; the sequence is MEPRGTKRKAEKTEVEKPLNKLPRAVPSLR. Residues Arg-58, Glu-101, and 131-133 contribute to the substrate site; that span reads WRG. Met-185 serves as a coordination point for adenosine 3',5'-bisphosphate. Glu-192 serves as a coordination point for Mg(2+). The substrate site is built by Cys-217 and Glu-234. Glu-234, Asp-236, Glu-253, and Leu-254 together coordinate Mg(2+). Adenosine 3',5'-bisphosphate is bound at residue Asp-236. Positions 253 to 256 are adenosine 3',5'-bisphosphate; inhibitor; sequence ELKT. Substrate is bound by residues Lys-255 and Gln-280. Gln-280 contacts adenosine 3',5'-bisphosphate. A Phosphothreonine modification is found at Thr-392. A Phosphoserine modification is found at Ser-394.

The protein belongs to the DXO/Dom3Z family. Mg(2+) serves as cofactor.

The protein localises to the nucleus. The catalysed reaction is a 5'-end triphospho-ribonucleoside in mRNA + H2O = a 5'-end phospho-ribonucleoside in mRNA + diphosphate + H(+). It catalyses the reaction a 5'-end NAD(+)-phospho-ribonucleoside in mRNA + H2O = a 5'-end phospho-ribonucleoside in mRNA + NAD(+) + H(+). It carries out the reaction a 5'-end NAD(+)-phospho-ribonucleoside in snoRNA + H2O = a 5'-end phospho-ribonucleoside in snoRNA + NAD(+) + H(+). The enzyme catalyses a 5'-end (N(7)-methyl 5'-triphosphoguanosine)-ribonucleoside-ribonucleotide in mRNA + H2O = a (N(7)-methyl 5'-triphosphoguanosine)-nucleoside + a 5'-end phospho-ribonucleoside in mRNA + H(+). The catalysed reaction is a 5'-end FAD-phospho-ribonucleoside in mRNA + H2O = a 5'-end phospho-ribonucleoside in mRNA + FAD + H(+). It catalyses the reaction a 5'-end CoA-ribonucleoside in mRNA + H2O = 3'-dephospho-CoA + a 5'-end phospho-ribonucleoside in mRNA + H(+). Its activity is regulated as follows. The 5'-3' exoribonuclease activity is inhibited by adenosine 3',5'-bisphosphate. In terms of biological role, decapping enzyme for NAD-capped RNAs: specifically hydrolyzes the nicotinamide adenine dinucleotide (NAD) cap from a subset of RNAs by removing the entire NAD moiety from the 5'-end of an NAD-capped RNA. The NAD-cap is present at the 5'-end of some RNAs and snoRNAs. In contrast to the canonical 5'-end N7 methylguanosine (m7G) cap, the NAD cap promotes mRNA decay. Preferentially acts on NAD-capped transcripts in response to environmental stress. Also acts as a non-canonical decapping enzyme that removes the entire cap structure of m7G capped or incompletely capped RNAs and mediates their subsequent degradation. Specifically degrades pre-mRNAs with a defective 5'-end m7G cap and is part of a pre-mRNA capping quality control. Has decapping activity toward incomplete 5'-end m7G cap mRNAs such as unmethylated 5'-end-capped RNA (cap0), while it has no activity toward 2'-O-ribose methylated m7G cap (cap1). In contrast to canonical decapping enzymes DCP2 and NUDT16, which cleave the cap within the triphosphate linkage, the decapping activity releases the entire cap structure GpppN and a 5'-end monophosphate RNA. Also has 5'-3' exoribonuclease activities: The 5'-end monophosphate RNA is then degraded by the 5'-3' exoribonuclease activity, enabling this enzyme to decap and degrade incompletely capped mRNAs. Also possesses RNA 5'-pyrophosphohydrolase activity by hydrolyzing the 5'-end triphosphate to release pyrophosphates. Exhibits decapping activity towards FAD-capped RNAs. Exhibits decapping activity towards dpCoA-capped RNAs in vitro. This chain is Decapping and exoribonuclease protein, found in Mus musculus (Mouse).